The sequence spans 482 residues: Interferon-induced protein with tetratricopeptide repeats 5 (482 aa).

8 TPR repeats span residues 51–84 (LALY…IQQE), 94–127 (LVTW…CKKL), 138–173 (PETD…EPDN), 181–214 (AITV…NPDN), 249–282 (PYVL…TPTS), 338–371 (AFAY…ENIT), 376–410 (HQIH…KDRS), and 435–468 (VQSL…DPEN). An interaction with the 5'-triphosphate group of PPP-RNA region spans residues 254-260 (YAAKFYR).

It belongs to the IFIT family. Monomer. Interacts with MAP3K7 and the components of the IKK core complex CHUK, IKBKB and IKBKG; the interaction synergizes the recruitment of IKK to MAP3K7 and enhances IKK phosphorylation.

The protein resides in the cell projection. The protein localises to the ruffle membrane. Its function is as follows. Interferon-induced RNA-binding protein involved in the human innate immune response. Has a broad and adaptable RNA structure recognition important for RNA recognition specificity in antiviral defense. Binds precursor and processed tRNAs as well as poly-U-tailed tRNA fragments. Specifically binds single-stranded RNA bearing a 5'-triphosphate group (PPP-RNA), thereby acting as a sensor of viral single-stranded RNAs. Single-stranded PPP-RNAs, which lack 2'-O-methylation of the 5' cap and bear a 5'-triphosphate group instead, are specific from viruses, providing a molecular signature to distinguish between self and non-self mRNAs by the host during viral infection. Directly binds PPP-RNA in a non-sequence-specific manner. Also recognizes and selectively binds AT-rich dsDNA. Additionally, as a mediator in innate immunity, positively regulates IKK-NFKB signaling by sinergizing the recruitment of IKK to MAP3K7. In Homo sapiens (Human), this protein is Interferon-induced protein with tetratricopeptide repeats 5 (IFIT5).